The sequence spans 189 residues: Adenine phosphoribosyltransferase (189 aa).

Belongs to the purine/pyrimidine phosphoribosyltransferase family. In terms of assembly, homodimer.

The protein localises to the cytoplasm. It carries out the reaction AMP + diphosphate = 5-phospho-alpha-D-ribose 1-diphosphate + adenine. Its pathway is purine metabolism; AMP biosynthesis via salvage pathway; AMP from adenine: step 1/1. Functionally, catalyzes a salvage reaction resulting in the formation of AMP, that is energically less costly than de novo synthesis. The sequence is that of Adenine phosphoribosyltransferase from Frankia alni (strain DSM 45986 / CECT 9034 / ACN14a).